The sequence spans 706 residues: Ribosomal RNA large subunit methyltransferase K/L (706 aa).

Residues 43–154 (LLYQSLLWSR…RDMASVALDL (112 aa)) enclose the THUMP domain.

Belongs to the methyltransferase superfamily. RlmKL family.

The protein resides in the cytoplasm. It carries out the reaction guanosine(2445) in 23S rRNA + S-adenosyl-L-methionine = N(2)-methylguanosine(2445) in 23S rRNA + S-adenosyl-L-homocysteine + H(+). The catalysed reaction is guanosine(2069) in 23S rRNA + S-adenosyl-L-methionine = N(2)-methylguanosine(2069) in 23S rRNA + S-adenosyl-L-homocysteine + H(+). In terms of biological role, specifically methylates the guanine in position 2445 (m2G2445) and the guanine in position 2069 (m7G2069) of 23S rRNA. The sequence is that of Ribosomal RNA large subunit methyltransferase K/L from Serratia proteamaculans (strain 568).